Here is a 115-residue protein sequence, read N- to C-terminus: Large ribosomal subunit protein mL60 (115 aa).

Residues methionine 1–leucine 23 constitute a mitochondrion transit peptide. The segment at alanine 88–phenylalanine 115 is disordered. Over residues tryptophan 103 to phenylalanine 115 the composition is skewed to polar residues.

It belongs to the mitochondrion-specific ribosomal protein mL60 family. As to quaternary structure, component of the mitochondrial large ribosomal subunit (mt-LSU). Mature yeast 74S mitochondrial ribosomes consist of a small (37S) and a large (54S) subunit. The 37S small subunit contains a 15S ribosomal RNA (15S mt-rRNA) and at least 32 different proteins. The 54S large subunit contains a 21S rRNA (21S mt-rRNA) and at least 45 different proteins.

The protein localises to the mitochondrion. Component of the mitochondrial ribosome (mitoribosome), a dedicated translation machinery responsible for the synthesis of mitochondrial genome-encoded proteins, including at least some of the essential transmembrane subunits of the mitochondrial respiratory chain. The mitoribosomes are attached to the mitochondrial inner membrane and translation products are cotranslationally integrated into the membrane. This Schizosaccharomyces pombe (strain 972 / ATCC 24843) (Fission yeast) protein is Large ribosomal subunit protein mL60 (mrpl31).